A 252-amino-acid chain; its full sequence is Imidazole glycerol phosphate synthase subunit HisF (252 aa).

Catalysis depends on residues D11 and D130.

This sequence belongs to the HisA/HisF family. As to quaternary structure, heterodimer of HisH and HisF.

The protein localises to the cytoplasm. The enzyme catalyses 5-[(5-phospho-1-deoxy-D-ribulos-1-ylimino)methylamino]-1-(5-phospho-beta-D-ribosyl)imidazole-4-carboxamide + L-glutamine = D-erythro-1-(imidazol-4-yl)glycerol 3-phosphate + 5-amino-1-(5-phospho-beta-D-ribosyl)imidazole-4-carboxamide + L-glutamate + H(+). Its pathway is amino-acid biosynthesis; L-histidine biosynthesis; L-histidine from 5-phospho-alpha-D-ribose 1-diphosphate: step 5/9. Its function is as follows. IGPS catalyzes the conversion of PRFAR and glutamine to IGP, AICAR and glutamate. The HisF subunit catalyzes the cyclization activity that produces IGP and AICAR from PRFAR using the ammonia provided by the HisH subunit. The sequence is that of Imidazole glycerol phosphate synthase subunit HisF from Bacillus pumilus (strain SAFR-032).